Reading from the N-terminus, the 395-residue chain is Probable protein arginine N-methyltransferase 6.2 (395 aa).

Residues 1–11 (MFAGGADGGNG) show a composition bias toward gly residues. The tract at residues 1–37 (MFAGGADGGNGHLPRPRRARRGGGGGGGMGSPPLGPP) is disordered. Residues 45–390 (DMAYFKAYSH…YFTRDQWYVK (346 aa)) enclose the SAM-dependent MTase PRMT-type domain. His-58, Arg-67, Gly-91, Asp-113, and Glu-142 together coordinate S-adenosyl-L-methionine. Active-site residues include Glu-156 and Glu-165. The interval 300-324 (KKQANQCLDGNTQDASPSNKKKKAD) is disordered. Residues 302 to 317 (QANQCLDGNTQDASPS) are compositionally biased toward polar residues.

It belongs to the class I-like SAM-binding methyltransferase superfamily. Protein arginine N-methyltransferase family. PRMT6 subfamily.

Arginine methyltransferase that can both catalyze the formation of omega-N monomethylarginine (MMA) and asymmetrical dimethylarginine (aDMA). This is Probable protein arginine N-methyltransferase 6.2 (PRMT6.2) from Oryza sativa subsp. indica (Rice).